The chain runs to 89 residues: Small ribosomal subunit protein uS15 (89 aa).

It belongs to the universal ribosomal protein uS15 family. As to quaternary structure, part of the 30S ribosomal subunit. Forms a bridge to the 50S subunit in the 70S ribosome, contacting the 23S rRNA.

Its function is as follows. One of the primary rRNA binding proteins, it binds directly to 16S rRNA where it helps nucleate assembly of the platform of the 30S subunit by binding and bridging several RNA helices of the 16S rRNA. Forms an intersubunit bridge (bridge B4) with the 23S rRNA of the 50S subunit in the ribosome. The polypeptide is Small ribosomal subunit protein uS15 (Anaeromyxobacter dehalogenans (strain 2CP-1 / ATCC BAA-258)).